The chain runs to 445 residues: Pre-B-cell leukemia transcription factor 2 (445 aa).

A disordered region spans residues 13-44 (VGIPGLPIHGGPQTLTPHPMHEPPTDNGEPRK). Over residues 31–44 (PMHEPPTDNGEPRK) the composition is skewed to basic and acidic residues. Residues 42 to 236 (PRKQDIGDIL…VMILRSRFLD (195 aa)) form the PBC domain. The tract at residues 49-128 (DILQQIMTIT…EGVAGPEKGG (80 aa)) is PBC-A. Residues 131-236 (AAAAAAAAAS…VMILRSRFLD (106 aa)) are PBC-B. The segment at residues 237 to 299 (ARRKRRNFSK…NKRIRYKKNI (63 aa)) is a DNA-binding region (homeobox; TALE-type). Positions 319-332 (QGGHSGANSPTTPT) are enriched in polar residues. The tract at residues 319-338 (QGGHSGANSPTTPTSAGSGG) is disordered.

The protein belongs to the TALE/PBX homeobox family.

It is found in the nucleus. Its function is as follows. Transcriptional activator that binds the sequence 5'-ATCAATCAA-3'. This chain is Pre-B-cell leukemia transcription factor 2 (pbx2), found in Xenopus laevis (African clawed frog).